Consider the following 122-residue polypeptide: Large ribosomal subunit protein uL14 (122 aa).

This sequence belongs to the universal ribosomal protein uL14 family. In terms of assembly, part of the 50S ribosomal subunit. Forms a cluster with proteins L3 and L19. In the 70S ribosome, L14 and L19 interact and together make contacts with the 16S rRNA in bridges B5 and B8.

Binds to 23S rRNA. Forms part of two intersubunit bridges in the 70S ribosome. The protein is Large ribosomal subunit protein uL14 of Desulfovibrio desulfuricans (strain ATCC 27774 / DSM 6949 / MB).